The chain runs to 66 residues: Sec-independent protein translocase protein TatA (66 aa).

The chain crosses the membrane as a helical span at residues 1-21 (MIGGLGMPELIIILVIILIIF). A disordered region spans residues 45–66 (RDAELNEGDKDDKEKEQEKLDK).

The protein belongs to the TatA/E family. The Tat system comprises two distinct complexes: a TatABC complex, containing multiple copies of TatA, TatB and TatC subunits, and a separate TatA complex, containing only TatA subunits. Substrates initially bind to the TatABC complex, which probably triggers association of the separate TatA complex to form the active translocon.

The protein localises to the cell inner membrane. In terms of biological role, part of the twin-arginine translocation (Tat) system that transports large folded proteins containing a characteristic twin-arginine motif in their signal peptide across membranes. TatA could form the protein-conducting channel of the Tat system. In Desulforapulum autotrophicum (strain ATCC 43914 / DSM 3382 / VKM B-1955 / HRM2) (Desulfobacterium autotrophicum), this protein is Sec-independent protein translocase protein TatA.